Reading from the N-terminus, the 687-residue chain is Glycine--tRNA ligase beta subunit (687 aa).

The protein belongs to the class-II aminoacyl-tRNA synthetase family. As to quaternary structure, tetramer of two alpha and two beta subunits.

It is found in the cytoplasm. The enzyme catalyses tRNA(Gly) + glycine + ATP = glycyl-tRNA(Gly) + AMP + diphosphate. This chain is Glycine--tRNA ligase beta subunit, found in Lactobacillus helveticus (strain DPC 4571).